The chain runs to 514 residues: Flagellin B (514 aa).

This sequence belongs to the bacterial flagellin family. As to quaternary structure, heteromer of FlaA and FlaB. FlaB is located proximal to the hook while the remainder of the filament is composed of the predominant FlaA.

Its subcellular location is the secreted. It localises to the bacterial flagellum. Flagellin is the subunit protein which polymerizes to form the filaments of bacterial flagella. Important for motility and virulence. In Helicobacter pylori (strain J99 / ATCC 700824) (Campylobacter pylori J99), this protein is Flagellin B (flaB).